A 705-amino-acid polypeptide reads, in one-letter code: tRNA 5-methylaminomethyl-2-thiouridine biosynthesis bifunctional protein MnmC (705 aa).

Residues 1–241 form a tRNA (mnm(5)s(2)U34)-methyltransferase region; the sequence is MTIKTADIQF…KREMLAGIIA (241 aa). Residues 289 to 705 form an FAD-dependent cmnm(5)s(2)U34 oxidoreductase region; that stretch reads IGAGIAGASM…LIRQLIRREV (417 aa).

The protein in the N-terminal section; belongs to the methyltransferase superfamily. tRNA (mnm(5)s(2)U34)-methyltransferase family. This sequence in the C-terminal section; belongs to the DAO family. It depends on FAD as a cofactor.

Its subcellular location is the cytoplasm. It catalyses the reaction 5-aminomethyl-2-thiouridine(34) in tRNA + S-adenosyl-L-methionine = 5-methylaminomethyl-2-thiouridine(34) in tRNA + S-adenosyl-L-homocysteine + H(+). In terms of biological role, catalyzes the last two steps in the biosynthesis of 5-methylaminomethyl-2-thiouridine (mnm(5)s(2)U) at the wobble position (U34) in tRNA. Catalyzes the FAD-dependent demodification of cmnm(5)s(2)U34 to nm(5)s(2)U34, followed by the transfer of a methyl group from S-adenosyl-L-methionine to nm(5)s(2)U34, to form mnm(5)s(2)U34. In Pseudoalteromonas atlantica (strain T6c / ATCC BAA-1087), this protein is tRNA 5-methylaminomethyl-2-thiouridine biosynthesis bifunctional protein MnmC.